The following is a 311-amino-acid chain: Ribonuclease HIII (311 aa).

Positions Met95 to Lys311 constitute an RNase H type-2 domain. Positions 101, 102, and 206 each coordinate a divalent metal cation.

This sequence belongs to the RNase HII family. RnhC subfamily. It depends on Mn(2+) as a cofactor. The cofactor is Mg(2+).

The protein localises to the cytoplasm. The catalysed reaction is Endonucleolytic cleavage to 5'-phosphomonoester.. Its function is as follows. Endonuclease that specifically degrades the RNA of RNA-DNA hybrids. This Bacillus cereus (strain ZK / E33L) protein is Ribonuclease HIII.